A 207-amino-acid chain; its full sequence is Holliday junction branch migration complex subunit RuvA (207 aa).

The segment at 1–64 (MIGRLTGILA…ETSQQLFGFS (64 aa)) is domain I. Residues 65–142 (SQQDRELFRM…ALDTTPSEHS (78 aa)) are domain II. The flexible linker stretch occupies residues 143–157 (PTGEGAGIVRVDPVI). The tract at residues 158-207 (NTNVIIADAESALIGLGYKPTEAAKAVSAAYNDTITTSEDLIRAALKGMI) is domain III.

Belongs to the RuvA family. Homotetramer. Forms an RuvA(8)-RuvB(12)-Holliday junction (HJ) complex. HJ DNA is sandwiched between 2 RuvA tetramers; dsDNA enters through RuvA and exits via RuvB. An RuvB hexamer assembles on each DNA strand where it exits the tetramer. Each RuvB hexamer is contacted by two RuvA subunits (via domain III) on 2 adjacent RuvB subunits; this complex drives branch migration. In the full resolvosome a probable DNA-RuvA(4)-RuvB(12)-RuvC(2) complex forms which resolves the HJ.

The protein resides in the cytoplasm. The RuvA-RuvB-RuvC complex processes Holliday junction (HJ) DNA during genetic recombination and DNA repair, while the RuvA-RuvB complex plays an important role in the rescue of blocked DNA replication forks via replication fork reversal (RFR). RuvA specifically binds to HJ cruciform DNA, conferring on it an open structure. The RuvB hexamer acts as an ATP-dependent pump, pulling dsDNA into and through the RuvAB complex. HJ branch migration allows RuvC to scan DNA until it finds its consensus sequence, where it cleaves and resolves the cruciform DNA. The protein is Holliday junction branch migration complex subunit RuvA of Saccharophagus degradans (strain 2-40 / ATCC 43961 / DSM 17024).